We begin with the raw amino-acid sequence, 211 residues long: tRNA (guanine-N(7)-)-methyltransferase (211 aa).

S-adenosyl-L-methionine contacts are provided by Glu-44, Asp-69, Asp-96, and Asp-118. Asp-118 is a catalytic residue. Lys-122 lines the substrate pocket. Positions 124–129 (RHEKRR) are interaction with RNA. Substrate is bound by residues Asp-154 and 191-194 (TEYE).

Belongs to the class I-like SAM-binding methyltransferase superfamily. TrmB family.

The catalysed reaction is guanosine(46) in tRNA + S-adenosyl-L-methionine = N(7)-methylguanosine(46) in tRNA + S-adenosyl-L-homocysteine. Its pathway is tRNA modification; N(7)-methylguanine-tRNA biosynthesis. Its function is as follows. Catalyzes the formation of N(7)-methylguanine at position 46 (m7G46) in tRNA. The chain is tRNA (guanine-N(7)-)-methyltransferase from Streptococcus equi subsp. equi (strain 4047).